A 447-amino-acid polypeptide reads, in one-letter code: tRNA-2-methylthio-N(6)-dimethylallyladenosine synthase (447 aa).

In terms of domain architecture, MTTase N-terminal spans Arg4 to Thr120. Residues Cys13, Cys49, Cys83, Cys161, Cys165, and Cys168 each contribute to the [4Fe-4S] cluster site. Residues His147–Glu382 form the Radical SAM core domain. A TRAM domain is found at Gln385–Glu446.

Belongs to the methylthiotransferase family. MiaB subfamily. In terms of assembly, monomer. It depends on [4Fe-4S] cluster as a cofactor.

Its subcellular location is the cytoplasm. The enzyme catalyses N(6)-dimethylallyladenosine(37) in tRNA + (sulfur carrier)-SH + AH2 + 2 S-adenosyl-L-methionine = 2-methylsulfanyl-N(6)-dimethylallyladenosine(37) in tRNA + (sulfur carrier)-H + 5'-deoxyadenosine + L-methionine + A + S-adenosyl-L-homocysteine + 2 H(+). Catalyzes the methylthiolation of N6-(dimethylallyl)adenosine (i(6)A), leading to the formation of 2-methylthio-N6-(dimethylallyl)adenosine (ms(2)i(6)A) at position 37 in tRNAs that read codons beginning with uridine. The polypeptide is tRNA-2-methylthio-N(6)-dimethylallyladenosine synthase (Desulfotalea psychrophila (strain LSv54 / DSM 12343)).